The following is a 782-amino-acid chain: Protein NEDD1 (782 aa).

8 WD repeats span residues 1–34 (MMSN…GDPC), 41–80 (SPGC…LGTV), 90–130 (SAEE…CIKK), 133–172 (GHTS…RATE), 176–216 (PNGQ…PKMS), 220–260 (QHSA…SSSC), 262–301 (AYEA…QPVT), and 307–358 (SNSE…TPSA). Disordered regions lie at residues 350–393 (PLPS…WPSG) and 467–512 (PIFD…EAWG). 3 stretches are compositionally biased toward polar residues: residues 352-362 (PSTTPSASQSA), 370-386 (VSAS…TPNR), and 488-498 (SFGSITPTASS). Residues 753-782 (VLSSILENQAEQMKELKLLRKENQELRQRL) adopt a coiled-coil conformation.

As to expression, expressed in root meristematic cells.

The protein localises to the nucleus envelope. Its subcellular location is the chromosome. The protein resides in the centromere. It localises to the kinetochore. It is found in the cytoplasm. The protein localises to the cytoskeleton. Its subcellular location is the phragmoplast. The protein resides in the microtubule organizing center. Functionally, regulates microtubules organization in a centrosome-independent manner. Required for the spindle to be positioned correctly and for the function of gamma-tubulin in organizing phragmoplast microtubules. Component of active gamma-tubulin ring complexes (gamma-TuRCs) associated with cortical microtubules in interphase cells. Mediates gamma-TuRC recruitment to the nucleation sites and is important for determining the ratio of branched to parallel nucleation. May mediate the localization of GCP2 and GCP3 to the nuclear envelope. This Arabidopsis thaliana (Mouse-ear cress) protein is Protein NEDD1.